A 510-amino-acid chain; its full sequence is Protein phosphatase EYA3 (510 aa).

Disordered stretches follow at residues 1–32 (MQEP…SNLS) and 175–233 (YQTE…DASS). Residues 7-16 (QTLSQVNNPD) show a composition bias toward polar residues. The segment covering 192–203 (LPSDSSASPPLS) has biased composition (low complexity). A phosphoserine mark is found at serine 199 and serine 203. The Nucleophile role is filled by aspartate 246. Residues aspartate 246 and aspartate 248 each contribute to the Mg(2+) site. The active-site Proton donor is the aspartate 248. Serine 375 and serine 409 each carry phosphoserine. Position 474 (aspartate 474) interacts with Mg(2+).

This sequence belongs to the HAD-like hydrolase superfamily. EYA family. As to quaternary structure, interacts with SIX1 and DACH1, and probably SIX2, SIX4 and SIX5. Mg(2+) is required as a cofactor. In terms of processing, ser-203 phosphorylation is required for localization at sites of DNA damage and directing interaction with H2AX. As to expression, expressed in branchial arches, CNS and developing eye.

The protein resides in the cytoplasm. It localises to the nucleus. The catalysed reaction is O-phospho-L-tyrosyl-[protein] + H2O = L-tyrosyl-[protein] + phosphate. Functionally, tyrosine phosphatase that specifically dephosphorylates 'Tyr-142' of histone H2AX (H2AXY142ph). 'Tyr-142' phosphorylation of histone H2AX plays a central role in DNA repair and acts as a mark that distinguishes between apoptotic and repair responses to genotoxic stress. Promotes efficient DNA repair by dephosphorylating H2AX, promoting the recruitment of DNA repair complexes containing MDC1. Its function as histone phosphatase probably explains its role in transcription regulation during organogenesis. The phosphatase activity has been shown in vitro. Coactivates SIX1. Seems to coactivate SIX2, SIX4 and SIX5. The repression of precursor cell proliferation in myoblasts by SIX1 is switched to activation through recruitment of EYA3 to the SIX1-DACH1 complex and seems to be dependent on EYA3 phosphatase activity. May be involved in development of the eye. May play a role in mediating the induction and differentiation of cranial placodes. This chain is Protein phosphatase EYA3 (Eya3), found in Mus musculus (Mouse).